Consider the following 59-residue polypeptide: Large ribosomal subunit protein uL30 (59 aa).

This sequence belongs to the universal ribosomal protein uL30 family. Part of the 50S ribosomal subunit.

The sequence is that of Large ribosomal subunit protein uL30 from Ectopseudomonas mendocina (strain ymp) (Pseudomonas mendocina).